Here is a 132-residue protein sequence, read N- to C-terminus: MSKVYDTLGNLKVGSFIVIDGEPCRIVEMSRAKTGKHGSAKANVVAIGLFSKAKKTLVAPVDTQVEVPVIEKHVGQIIADMGTMYQVMDMETYETFEVEKDSIEEDIRNKLGVGSEVEYWVVMGKRLIIRPR.

At Lys-36 the chain carries Hypusine.

It belongs to the eIF-5A family.

The protein resides in the cytoplasm. Its function is as follows. Functions by promoting the formation of the first peptide bond. This is Translation initiation factor 5A (eIF5A) from Desulfurococcus amylolyticus (strain DSM 18924 / JCM 16383 / VKM B-2413 / 1221n) (Desulfurococcus kamchatkensis).